Here is a 316-residue protein sequence, read N- to C-terminus: 4-diphosphocytidyl-2-C-methyl-D-erythritol kinase (316 aa).

Residue Lys32 is part of the active site. 126–136 (PVGAGLGGGSA) contacts ATP. Residue Asp168 is part of the active site.

The protein belongs to the GHMP kinase family. IspE subfamily.

It carries out the reaction 4-CDP-2-C-methyl-D-erythritol + ATP = 4-CDP-2-C-methyl-D-erythritol 2-phosphate + ADP + H(+). It participates in isoprenoid biosynthesis; isopentenyl diphosphate biosynthesis via DXP pathway; isopentenyl diphosphate from 1-deoxy-D-xylulose 5-phosphate: step 3/6. In terms of biological role, catalyzes the phosphorylation of the position 2 hydroxy group of 4-diphosphocytidyl-2C-methyl-D-erythritol. This is 4-diphosphocytidyl-2-C-methyl-D-erythritol kinase from Bifidobacterium longum (strain DJO10A).